A 151-amino-acid chain; its full sequence is Large ribosomal subunit protein bL9 (151 aa).

The protein belongs to the bacterial ribosomal protein bL9 family.

Functionally, binds to the 23S rRNA. The sequence is that of Large ribosomal subunit protein bL9 from Francisella tularensis subsp. holarctica (strain LVS).